A 367-amino-acid polypeptide reads, in one-letter code: Eukaryotic translation initiation factor 3 subunit H (367 aa).

The MPN domain maps to V14–F166.

This sequence belongs to the eIF-3 subunit H family. Component of the eukaryotic translation initiation factor 3 (eIF-3) complex.

It is found in the cytoplasm. Its function is as follows. Component of the eukaryotic translation initiation factor 3 (eIF-3) complex, which is involved in protein synthesis of a specialized repertoire of mRNAs and, together with other initiation factors, stimulates binding of mRNA and methionyl-tRNAi to the 40S ribosome. The eIF-3 complex specifically targets and initiates translation of a subset of mRNAs involved in cell proliferation. The chain is Eukaryotic translation initiation factor 3 subunit H from Botryotinia fuckeliana (strain B05.10) (Noble rot fungus).